A 208-amino-acid chain; its full sequence is Uracil phosphoribosyltransferase (208 aa).

Residues arginine 78, arginine 103, and 130-138 contribute to the 5-phospho-alpha-D-ribose 1-diphosphate site; that span reads DPMLATGGS. Uracil-binding positions include isoleucine 193 and 198-200; that span reads GDA. A 5-phospho-alpha-D-ribose 1-diphosphate-binding site is contributed by aspartate 199.

It belongs to the UPRTase family. The cofactor is Mg(2+).

The catalysed reaction is UMP + diphosphate = 5-phospho-alpha-D-ribose 1-diphosphate + uracil. Its pathway is pyrimidine metabolism; UMP biosynthesis via salvage pathway; UMP from uracil: step 1/1. Its activity is regulated as follows. Allosterically activated by GTP. Its function is as follows. Catalyzes the conversion of uracil and 5-phospho-alpha-D-ribose 1-diphosphate (PRPP) to UMP and diphosphate. This Psychromonas ingrahamii (strain DSM 17664 / CCUG 51855 / 37) protein is Uracil phosphoribosyltransferase.